The chain runs to 404 residues: Cysteine desulfurase IscS (404 aa).

Residues 75–76 (AT), Asn-155, Gln-183, and 203–205 (SGH) contribute to the pyridoxal 5'-phosphate site. Lys-206 carries the N6-(pyridoxal phosphate)lysine modification. Residue Thr-243 participates in pyridoxal 5'-phosphate binding. Cys-328 serves as the catalytic Cysteine persulfide intermediate. Residue Cys-328 participates in [2Fe-2S] cluster binding.

This sequence belongs to the class-V pyridoxal-phosphate-dependent aminotransferase family. NifS/IscS subfamily. In terms of assembly, homodimer. Forms a heterotetramer with IscU, interacts with other sulfur acceptors. It depends on pyridoxal 5'-phosphate as a cofactor.

The protein resides in the cytoplasm. It carries out the reaction (sulfur carrier)-H + L-cysteine = (sulfur carrier)-SH + L-alanine. It functions in the pathway cofactor biosynthesis; iron-sulfur cluster biosynthesis. Its function is as follows. Master enzyme that delivers sulfur to a number of partners involved in Fe-S cluster assembly, tRNA modification or cofactor biosynthesis. Catalyzes the removal of elemental sulfur atoms from cysteine to produce alanine. Functions as a sulfur delivery protein for Fe-S cluster synthesis onto IscU, an Fe-S scaffold assembly protein, as well as other S acceptor proteins. This is Cysteine desulfurase IscS from Klebsiella pneumoniae (strain 342).